The following is a 315-amino-acid chain: Heme oxygenase 2 (315 aa).

Over residues 1–15 (MSSEVETSEGVDESE) the composition is skewed to polar residues. Residues 1-29 (MSSEVETSEGVDESENNSTAPEKENHTKM) form a disordered region. At Ser2 the chain carries N-acetylserine. Residue Ser2 is modified to Phosphoserine. Residues 2 to 294 (SSEVETSEGV…TAMAVLRKPS (293 aa)) lie on the Cytoplasmic side of the membrane. Residues His44, Tyr153, Lys198, and Arg202 each coordinate heme b. HRM repeat units follow at residues 263-268 (KCPFYA) and 280-285 (NCPFRT). S-nitrosocysteine is present on residues Cys264 and Cys281. Residues 295–315 (LQLILAASVALVAGLLAWYYM) traverse the membrane as a helical; Anchor for type IV membrane protein segment.

Belongs to the heme oxygenase family. In terms of processing, a soluble form arises by proteolytic removal of the membrane anchor. S-nitrosylated by BLVRB. As to expression, widely distributed in body with a high concentration in the brain.

It is found in the microsome membrane. The protein resides in the endoplasmic reticulum membrane. The catalysed reaction is heme b + 3 reduced [NADPH--hemoprotein reductase] + 3 O2 = biliverdin IXalpha + CO + Fe(2+) + 3 oxidized [NADPH--hemoprotein reductase] + 3 H2O + H(+). Inhibited by metalloporphyrins such as Sn- and Zn-protoporphyrins. In terms of biological role, catalyzes the oxidative cleavage of heme at the alpha-methene bridge carbon, released as carbon monoxide (CO), to generate biliverdin IXalpha, while releasing the central heme iron chelate as ferrous iron. The chain is Heme oxygenase 2 (Hmox2) from Rattus norvegicus (Rat).